Here is a 286-residue protein sequence, read N- to C-terminus: Phosphoribosylaminoimidazole-succinocarboxamide synthase (286 aa).

The protein belongs to the SAICAR synthetase family.

The enzyme catalyses 5-amino-1-(5-phospho-D-ribosyl)imidazole-4-carboxylate + L-aspartate + ATP = (2S)-2-[5-amino-1-(5-phospho-beta-D-ribosyl)imidazole-4-carboxamido]succinate + ADP + phosphate + 2 H(+). Its pathway is purine metabolism; IMP biosynthesis via de novo pathway; 5-amino-1-(5-phospho-D-ribosyl)imidazole-4-carboxamide from 5-amino-1-(5-phospho-D-ribosyl)imidazole-4-carboxylate: step 1/2. This chain is Phosphoribosylaminoimidazole-succinocarboxamide synthase (purC), found in Pasteurella multocida (strain Pm70).